The chain runs to 352 residues: DNA-directed RNA polymerase subunit alpha (352 aa).

The alpha N-terminal domain (alpha-NTD) stretch occupies residues 1 to 236 (MTVNIRNWQE…DQLQVFVHFE (236 aa)). Residues 257 to 352 (SDVNQLNRFL…AKKLEQELLG (96 aa)) are alpha C-terminal domain (alpha-CTD).

The protein belongs to the RNA polymerase alpha chain family. As to quaternary structure, homodimer. The RNAP catalytic core consists of 2 alpha, 1 beta, 1 beta' and 1 omega subunit. When a sigma factor is associated with the core the holoenzyme is formed, which can initiate transcription.

The enzyme catalyses RNA(n) + a ribonucleoside 5'-triphosphate = RNA(n+1) + diphosphate. Its function is as follows. DNA-dependent RNA polymerase catalyzes the transcription of DNA into RNA using the four ribonucleoside triphosphates as substrates. The polypeptide is DNA-directed RNA polymerase subunit alpha (Sphingopyxis alaskensis (strain DSM 13593 / LMG 18877 / RB2256) (Sphingomonas alaskensis)).